A 355-amino-acid chain; its full sequence is Protein MGF 360-3L (355 aa).

The ANK repeat unit spans residues 60 to 92 (KLNTALVLAVKENNYDLIVLFTEWGANINYALL).

The protein belongs to the asfivirus MGF 360 family.

Its function is as follows. Plays a role in virus cell tropism, and may be required for efficient virus replication in macrophages. This is Protein MGF 360-3L from Ornithodoros (relapsing fever ticks).